A 177-amino-acid polypeptide reads, in one-letter code: O-acetyl-ADP-ribose deacetylase (177 aa).

The Macro domain occupies 1-175; sequence MKSRIHVLQG…LYNRLLTQQG (175 aa). Substrate-binding positions include 11-12, asparagine 25, 33-35, and 122-126; these read DI, GVD, and STGVY. The Proton acceptor role is filled by aspartate 35.

This sequence belongs to the MacroD-type family. YmdB subfamily. In terms of assembly, homodimer. Interacts with RNase III.

The catalysed reaction is 3''-O-acetyl-ADP-D-ribose + H2O = ADP-D-ribose + acetate + H(+). It catalyses the reaction 2''-O-acetyl-ADP-D-ribose + H2O = ADP-D-ribose + acetate + H(+). Deacetylates O-acetyl-ADP ribose to yield ADP-ribose and free acetate. Down-regulates ribonuclease 3 (RNase III) activity. Acts by interacting directly with the region of the ribonuclease that is required for dimerization/activation. The chain is O-acetyl-ADP-ribose deacetylase from Escherichia fergusonii (strain ATCC 35469 / DSM 13698 / CCUG 18766 / IAM 14443 / JCM 21226 / LMG 7866 / NBRC 102419 / NCTC 12128 / CDC 0568-73).